We begin with the raw amino-acid sequence, 833 residues long: Patatin-like phospholipase domain-containing protein SNOG_00918 (833 aa).

Disordered regions lie at residues 1–20 (MTDVKKESDGPEPYSSSAFD) and 49–71 (HLSPSTEDLTAPQPETGKFSANN). A helical membrane pass occupies residues 108 to 128 (WPLLVVVLGWLLFLSIAYVFT). The PNPLA domain occupies 301 to 457 (LCLSGGATFA…RTDIPLKALN (157 aa)). Positions 332-336 (GTSGG) match the GXSXG motif. Residue Ser334 is the Nucleophile of the active site. The Proton acceptor role is filled by Asp444. Disordered regions lie at residues 630–657 (TKSKSPSEEAIYPLSGSESSSSADFSRP) and 680–833 (LRTD…GKGL). Residues 644–655 (SGSESSSSADFS) are compositionally biased toward low complexity. Positions 689–707 (DTPNSPSLSARLTGWWNTK) are enriched in polar residues. 3 stretches are compositionally biased toward basic and acidic residues: residues 740 to 750 (RPPKEVRDLQA), 759 to 769 (RNSDFLEEIRR), and 782 to 794 (DEGRAGRYRRGDV). Positions 809–819 (EFGDNEGDGEE) are enriched in acidic residues.

It belongs to the PLPL family.

It is found in the membrane. Probable lipid hydrolase. This chain is Patatin-like phospholipase domain-containing protein SNOG_00918, found in Phaeosphaeria nodorum (strain SN15 / ATCC MYA-4574 / FGSC 10173) (Glume blotch fungus).